A 344-amino-acid chain; its full sequence is Protein RecA (344 aa).

64–71 contributes to the ATP binding site; that stretch reads GPESSGKT.

This sequence belongs to the RecA family.

The protein resides in the cytoplasm. Can catalyze the hydrolysis of ATP in the presence of single-stranded DNA, the ATP-dependent uptake of single-stranded DNA by duplex DNA, and the ATP-dependent hybridization of homologous single-stranded DNAs. It interacts with LexA causing its activation and leading to its autocatalytic cleavage. The polypeptide is Protein RecA (Paramagnetospirillum magnetotacticum (Aquaspirillum magnetotacticum)).